Reading from the N-terminus, the 696-residue chain is Junctophilin-2 (696 aa).

Residues 1–674 lie on the Cytoplasmic side of the membrane; it reads MSGGRFDFDD…EVEVEEVPNT (674 aa). MORN repeat units lie at residues 14-36, 38-59, 60-79, 82-104, 106-128, and 129-151; these read YCGGWEGGKAHGHGLCTGPKGQG, YSGSWNFGFEVAGVYTWPSGNT, FEGYWSQGKRHGLGIETKGR, YKGEWTHGFKGRYGIRQSTNSGA, YEGTWNNGLQDGYGTETYADGGT, and YQGQFTNGMRHGYGVRQSVPYGM. Phosphoserine is present on residues S162 and S165. 2 disordered regions span residues 164-192 and 246-273; these read SSLRSEHSNGTVAPDSPAADGPMLPSPPV and LSSGASDAASTGSLAEGAEGPDDAAAPF. MORN repeat units lie at residues 285-307 and 308-330; these read YMGEWKNDKRSGFGVSERSSGLR and YEGEWLDNLRHGYGRTTLPDGHR. The short motif at 345 to 359 is the Bipartite nuclear localization signal element; it reads KRRVLPLKSSKVRQK. Residues 439–664 form a disordered region; it reads NSESLLEPPE…RKEVAQAKEA (226 aa). Phosphoserine occurs at positions 440, 442, and 462. Residues 457-471 are compositionally biased toward basic and acidic residues; the sequence is ERPRESPQLHERETP. Residue T470 is modified to Phosphothreonine. Residues 474–487 show a composition bias toward pro residues; sequence EGGPPSPAGTPPQP. The residue at position 479 (S479) is a Phosphoserine. Residue T483 is modified to Phosphothreonine. Positions 488–492 match the Nuclear localization signal motif; the sequence is KRPRP. Residues S527 and S533 each carry the phosphoserine modification. Positions 573-585 are enriched in acidic residues; sequence PLEDEQEPEPEPE. 3 positions are modified to phosphoserine: S593, S597, and S613. Residues 631–644 are compositionally biased toward basic and acidic residues; the sequence is AEPKAKARKTEARG. A helical; Anchor for type IV membrane protein membrane pass occupies residues 675-695; that stretch reads VLICMVILLNIGLAILFVHLL.

The protein belongs to the junctophilin family. As to quaternary structure, interacts with TRPC3. Interacts with BAG5 and HSPA8; the interaction with HSPA8 is increased in the presence of BAG5. In terms of assembly, interacts with MEF2C. Proteolytically cleaved by calpain in response to cardiac stress. The major cleavage site takes place at the C-terminus and leads to the release of the Junctophilin-2 N-terminal fragment chain (JP2NT). Post-translationally, phosphorylation on Ser-165, probably by PKC, affects RYR1-mediated calcium ion release, interaction with TRPC3, and skeletal muscle myotubule development. As to expression, abundantly expressed in skeletal muscle and heart. Weak expression in stomach and lung.

It localises to the cell membrane. The protein resides in the sarcoplasmic reticulum membrane. It is found in the endoplasmic reticulum membrane. Its subcellular location is the nucleus. Functionally, membrane-binding protein that provides a structural bridge between the plasma membrane and the sarcoplasmic reticulum and is required for normal excitation-contraction coupling in cardiomyocytes. Provides a structural foundation for functional cross-talk between the cell surface and intracellular Ca(2+) release channels by maintaining the 12-15 nm gap between the sarcolemma and the sarcoplasmic reticulum membranes in the cardiac dyads. Necessary for proper intracellular Ca(2+) signaling in cardiac myocytes via its involvement in ryanodine receptor-mediated calcium ion release. Contributes to the construction of skeletal muscle triad junctions. Transcription repressor required to safeguard against the deleterious effects of cardiac stress. Generated following cleavage of the Junctophilin-2 chain by calpain in response to cardiac stress in cardiomyocytes. Following cleavage and release from the membrane, translocates to the nucleus, binds DNA and represses expression of genes implicated in cell growth and differentiation, hypertrophy, inflammation and fibrosis. Modifies the transcription profile and thereby attenuates pathological remodeling in response to cardiac stress. Probably acts by competing with MEF2 transcription factors and TATA-binding proteins. In Mus musculus (Mouse), this protein is Junctophilin-2.